We begin with the raw amino-acid sequence, 196 residues long: MSSLAQASKPSAQRWGLGALIVLAILAVQASWLYFDGRIAMCECGTIKLWSGSLMTENSQHISDWYTLSHIIHGFLFYWLFTVIAPKAPLGLRLAAAVGIEAVWELVENSNFIIERYRANTSSVDYFGDSIVNSVADTVAALIGFLIAAKLPTKITVAIALFFEVLALIVIRDNLTLNVIMLLHPFEFIKQWQSGL.

4 helical membrane passes run 15 to 35 (WGLG…WLYF), 65 to 85 (WYTL…TVIA), 127 to 147 (FGDS…GFLI), and 151 to 171 (LPTK…LIVI).

It belongs to the UPF0314 family.

The protein localises to the cell membrane. This chain is UPF0314 protein Oant_0840, found in Brucella anthropi (strain ATCC 49188 / DSM 6882 / CCUG 24695 / JCM 21032 / LMG 3331 / NBRC 15819 / NCTC 12168 / Alc 37) (Ochrobactrum anthropi).